The chain runs to 95 residues: F(1)-ATPase inhibitor IF(1), mitochondrial (95 aa).

Residues 1–25 constitute a mitochondrion transit peptide; the sequence is MLRTTVSKLARPTVSRAFATTSRAL. 2 disordered regions span residues 20–48 and 76–95; these read TTSR…REKA and LKTL…GERN.

The protein belongs to the ATPase inhibitor family. As to quaternary structure, associates with the mitochondrial small ribosomal subunit (mt-SSU). IF(1) coiled-coil forms a helical bundle with the C-terminal extension of uS17m and also binds to mS27 in the mtSSU tail. Since the C-terminal extension of uS17m stabilizing the IF(1) on the mt-SSU is specific to N.crassa, IF(1) binding might also be specific.

It localises to the mitochondrion. In terms of biological role, endogenous F(1)F(0)-ATPase inhibitor limiting ATP depletion when the mitochondrial membrane potential falls below a threshold and the F(1)F(0)-ATP synthase starts hydrolyzing ATP to pump protons out of the mitochondrial matrix. Required to avoid the consumption of cellular ATP when the F(1)F(0)-ATP synthase enzyme acts as an ATP hydrolase. Functions through inserting its N-terminal part into the catalytically active F1-ATPase, thereby blocking its rotational movement and subsequently the ATP hydrolase activity. This Neurospora crassa (strain ATCC 24698 / 74-OR23-1A / CBS 708.71 / DSM 1257 / FGSC 987) protein is F(1)-ATPase inhibitor IF(1), mitochondrial (inh1).